A 352-amino-acid polypeptide reads, in one-letter code: Alanine racemase (352 aa).

The Proton acceptor; specific for D-alanine role is filled by Lys33. Lys33 carries the post-translational modification N6-(pyridoxal phosphate)lysine. Arg129 contacts substrate. The Proton acceptor; specific for L-alanine role is filled by Tyr250. Met298 is a substrate binding site.

It belongs to the alanine racemase family. Pyridoxal 5'-phosphate serves as cofactor.

The enzyme catalyses L-alanine = D-alanine. Its pathway is amino-acid biosynthesis; D-alanine biosynthesis; D-alanine from L-alanine: step 1/1. Catalyzes the interconversion of L-alanine and D-alanine. May also act on other amino acids. The protein is Alanine racemase (alr) of Neisseria meningitidis serogroup C / serotype 2a (strain ATCC 700532 / DSM 15464 / FAM18).